A 163-amino-acid polypeptide reads, in one-letter code: Adenosine 5'-monophosphoramidase HINT2 (163 aa).

The transit peptide at 1-17 (MAAAVVLAAGLCVARRA) directs the protein to the mitochondrion. The 109-residue stretch at 55–163 (IFSRILDRSL…GGRQLQWPPG (109 aa)) folds into the HIT domain. Ser-63 and Asp-80 together coordinate AMP. Lys-119 carries the post-translational modification N6-acetyllysine. Asn-136 is an AMP binding site. The residue at position 139 (Lys-139) is an N6-acetyllysine. AMP-binding positions include 142–145 (AQSV) and 149–151 (HIH). A Histidine triad motif motif is present at residues 147–151 (HLHIH). His-149 (tele-AMP-histidine intermediate) is an active-site residue.

It belongs to the HINT family.

The protein localises to the mitochondrion. The enzyme catalyses adenosine 5'-phosphoramidate + H2O = AMP + NH4(+). In terms of biological role, exhibits adenosine 5'-monophosphoramidase activity, hydrolyzing purine nucleotide phosphoramidates with a single phosphate group such as adenosine 5'monophosphoramidate (AMP-NH2) to yield AMP and NH2. Hydrolyzes adenosine 5'-O-p-nitrophenylphosphoramidate (AMP-pNA). May be involved in steroid biosynthesis. May play a role in apoptosis. The polypeptide is Adenosine 5'-monophosphoramidase HINT2 (Bos taurus (Bovine)).